A 197-amino-acid polypeptide reads, in one-letter code: UPF0200 protein MJ1399 (197 aa).

8–15 (GMPGAGKS) provides a ligand contact to ATP.

This sequence belongs to the UPF0200 family.

The protein is UPF0200 protein MJ1399 of Methanocaldococcus jannaschii (strain ATCC 43067 / DSM 2661 / JAL-1 / JCM 10045 / NBRC 100440) (Methanococcus jannaschii).